Reading from the N-terminus, the 357-residue chain is GTPase Obg (357 aa).

Residues 1 to 159 enclose the Obg domain; sequence MKFVDEAFID…KSLKLELKVL (159 aa). Residues 160-334 enclose the OBG-type G domain; the sequence is ADVGLLGMPN…LVQSIFQHVH (175 aa). GTP is bound by residues 166-173, 191-195, 213-216, 284-287, and 315-317; these read GMPNAGKS, FTTLH, DIPG, NKLD, and SAL. Ser-173 and Thr-193 together coordinate Mg(2+).

Belongs to the TRAFAC class OBG-HflX-like GTPase superfamily. OBG GTPase family. In terms of assembly, monomer. Mg(2+) serves as cofactor.

The protein resides in the cytoplasm. In terms of biological role, an essential GTPase which binds GTP, GDP and possibly (p)ppGpp with moderate affinity, with high nucleotide exchange rates and a fairly low GTP hydrolysis rate. Plays a role in control of the cell cycle, stress response, ribosome biogenesis and in those bacteria that undergo differentiation, in morphogenesis control. In Acidovorax sp. (strain JS42), this protein is GTPase Obg.